A 1008-amino-acid polypeptide reads, in one-letter code: Probable beta-galactosidase B (1008 aa).

A signal peptide spans 1 to 18 (MLLQSLFAWALAIGPCIA). 2 N-linked (GlcNAc...) asparagine glycosylation sites follow: asparagine 20 and asparagine 23. Tyrosine 87 is a binding site for substrate. N-linked (GlcNAc...) asparagine glycosylation occurs at asparagine 108. Residues asparagine 132, alanine 133, glutamate 134, and asparagine 192 each contribute to the substrate site. Glutamate 193 acts as the Proton donor in catalysis. Asparagine 208 is a glycosylation site (N-linked (GlcNAc...) asparagine). Substrate is bound at residue tyrosine 262. A disulfide bridge links cysteine 268 with cysteine 321. N-linked (GlcNAc...) asparagine glycosylation is present at asparagine 269. Glutamate 305 acts as the Nucleophile in catalysis. Position 370 (tyrosine 370) interacts with substrate. 10 N-linked (GlcNAc...) asparagine glycosylation sites follow: asparagine 453, asparagine 594, asparagine 624, asparagine 681, asparagine 703, asparagine 782, asparagine 788, asparagine 816, asparagine 826, and asparagine 879.

The protein belongs to the glycosyl hydrolase 35 family.

Its subcellular location is the secreted. The enzyme catalyses Hydrolysis of terminal non-reducing beta-D-galactose residues in beta-D-galactosides.. Cleaves beta-linked terminal galactosyl residues from gangliosides, glycoproteins, and glycosaminoglycans. The sequence is that of Probable beta-galactosidase B (lacB) from Sclerotinia sclerotiorum (strain ATCC 18683 / 1980 / Ss-1) (White mold).